Consider the following 143-residue polypeptide: Ribonuclease H (143 aa).

An RNase H type-1 domain is found at 1–140 (MKVEIYTDGA…VDALANLGIE (140 aa)). Positions 8, 46, 68, and 132 each coordinate Mg(2+).

The protein belongs to the RNase H family. As to quaternary structure, monomer. It depends on Mg(2+) as a cofactor.

Its subcellular location is the cytoplasm. It catalyses the reaction Endonucleolytic cleavage to 5'-phosphomonoester.. In terms of biological role, endonuclease that specifically degrades the RNA of RNA-DNA hybrids. This Legionella pneumophila (strain Lens) protein is Ribonuclease H.